Reading from the N-terminus, the 257-residue chain is MVINKVEICGVNTSKLPVLKEKEMRELLISMRNGNTTAREKFIKGNLRLVLSVIQRFNNRGENADDLFQVGCIGLIKSIDNFDLSQNVKFSTYAVPMIIGEIRRYLRDNNSIRVSRSLRDIAYRALQVRDRLISKNNKEPTVSQIAKELKIPREEVIFALDAIQDPISLFEPIYHDDGDAIYVMDQISDNKNLDDSWLQNISIKEAMKKLSDREKMILNMRFFDGRTQMEVADEIGISQAQVSRLEKTALKHMKKYV.

A Polymerase core binding motif is present at residues 66–79 (DLFQVGCIGLIKSI). The H-T-H motif DNA-binding region spans 228 to 247 (QMEVADEIGISQAQVSRLEK).

Belongs to the sigma-70 factor family.

Functionally, sigma factors are initiation factors that promote the attachment of RNA polymerase to specific initiation sites and are then released. This sigma factor is responsible for the expression of sporulation specific genes. The sequence is that of RNA polymerase sigma-G factor (sigG) from Clostridium acetobutylicum (strain ATCC 824 / DSM 792 / JCM 1419 / IAM 19013 / LMG 5710 / NBRC 13948 / NRRL B-527 / VKM B-1787 / 2291 / W).